A 490-amino-acid polypeptide reads, in one-letter code: Glucose-6-phosphate 1-dehydrogenase (490 aa).

Residues Arg48, 90–91, and Lys145 contribute to the NADP(+) site; that span reads DI. His175, Lys179, Glu213, and Asp232 together coordinate substrate. Catalysis depends on His237, which acts as the Proton acceptor. Residues Lys340 and Lys345 each contribute to the substrate site.

It belongs to the glucose-6-phosphate dehydrogenase family.

The catalysed reaction is D-glucose 6-phosphate + NADP(+) = 6-phospho-D-glucono-1,5-lactone + NADPH + H(+). Its pathway is carbohydrate degradation; pentose phosphate pathway; D-ribulose 5-phosphate from D-glucose 6-phosphate (oxidative stage): step 1/3. Functionally, catalyzes the oxidation of glucose 6-phosphate to 6-phosphogluconolactone. The protein is Glucose-6-phosphate 1-dehydrogenase of Buchnera aphidicola subsp. Baizongia pistaciae (strain Bp).